We begin with the raw amino-acid sequence, 179 residues long: Large ribosomal subunit protein uL5 (179 aa).

This sequence belongs to the universal ribosomal protein uL5 family. Part of the 50S ribosomal subunit; part of the 5S rRNA/L5/L18/L25 subcomplex. Contacts the 5S rRNA and the P site tRNA. Forms a bridge to the 30S subunit in the 70S ribosome.

This is one of the proteins that bind and probably mediate the attachment of the 5S RNA into the large ribosomal subunit, where it forms part of the central protuberance. In the 70S ribosome it contacts protein S13 of the 30S subunit (bridge B1b), connecting the 2 subunits; this bridge is implicated in subunit movement. Contacts the P site tRNA; the 5S rRNA and some of its associated proteins might help stabilize positioning of ribosome-bound tRNAs. This Vibrio campbellii (strain ATCC BAA-1116) protein is Large ribosomal subunit protein uL5.